Reading from the N-terminus, the 388-residue chain is 3beta-hydroxysteroid dehydrogenase dhs-16 (388 aa).

The helical transmembrane segment at Leu2–Val22 threads the bilayer. Catalysis depends on Tyr188, which acts as the Proton acceptor. 2 helical membrane passes run Ala300–Ala320 and Ile346–Phe366.

The protein belongs to the short-chain dehydrogenases/reductases (SDR) family. Strongly expressed in the hypodermis and posterior pharyngeal bulb and in a number of unidentified neurons of the head and tail.

It is found in the membrane. It catalyses the reaction lathosterol + NAD(+) = 5alpha-cholest-7-en-3-one + NADH + H(+). Its pathway is steroid hormone biosynthesis; dafachronic acid biosynthesis. In terms of biological role, 3beta-hydroxysteroid dehydrogenase that converts 3beta-hydroxysteroids to 3-ketosteroids, an essential step in the production of dafachronic acids from cholesterol. Catalyzes the dehydrogenation of lathosterol (5alpha-cholest-7-en-3beta-ol) to lathosterone (5alpha-cholest-7-en-3-one), a step required for maximal biosynthesis of Delta(7)-dafachronic acid. Dafachronic acids act as ligands and bind directly to the nuclear hormone receptor (NHR) daf-12, suppressing dauer formation and inducing reproductive growth, they can also regulate C.elegans lifespan. The polypeptide is 3beta-hydroxysteroid dehydrogenase dhs-16 (dhs-16) (Caenorhabditis elegans).